Reading from the N-terminus, the 232-residue chain is Peptidyl-prolyl cis-trans isomerase CYP26-1 (232 aa).

The PPIase cyclophilin-type domain maps to 7-166; sequence FFDLTVDGKP…KPVVIADCGE (160 aa). Asparagine 108 carries an N-linked (GlcNAc...) asparagine glycan. The helical transmembrane segment at 212-232 threads the bilayer; it reads YYLINIVVACMVLMCFWSWFV.

Belongs to the cyclophilin-type PPIase family. Expressed only in flowers.

It is found in the membrane. It carries out the reaction [protein]-peptidylproline (omega=180) = [protein]-peptidylproline (omega=0). Its function is as follows. PPIases accelerate the folding of proteins. It catalyzes the cis-trans isomerization of proline imidic peptide bonds in oligopeptides. The polypeptide is Peptidyl-prolyl cis-trans isomerase CYP26-1 (CYP26-1) (Arabidopsis thaliana (Mouse-ear cress)).